A 180-amino-acid polypeptide reads, in one-letter code: CASP-like protein 2D1 (180 aa).

Residues 1–7 (MAASGLK) are Cytoplasmic-facing. Residues 8-28 (VPEMALRVCVVPLALASLWEM) traverse the membrane as a helical segment. Residues 29–48 (ATNAQADDTYGEVKFSDLSG) are Extracellular-facing. A helical membrane pass occupies residues 49 to 69 (FSYLVGVNAVTAAYALVSILL). Topologically, residues 70-79 (SSLKPLARYD) are cytoplasmic. The chain crosses the membrane as a helical span at residues 80-100 (WVILVMDQASAYLLVTSASAA). Residues 101–129 (AELLQLARRGDREVSWGEVCSYFGRFCGK) lie on the Extracellular side of the membrane. Residues 130 to 150 (ATVSLALHAAALACFVALALV) form a helical membrane-spanning segment. Topologically, residues 151 to 180 (SAFRVLSTTGSSCHPPKHAQAQEHEQGRYN) are cytoplasmic. Positions 161-180 (SSCHPPKHAQAQEHEQGRYN) are disordered. Residues 170-180 (QAQEHEQGRYN) are compositionally biased toward basic and acidic residues.

It belongs to the Casparian strip membrane proteins (CASP) family. Homodimer and heterodimers.

The protein resides in the cell membrane. The sequence is that of CASP-like protein 2D1 from Sorghum bicolor (Sorghum).